Reading from the N-terminus, the 473-residue chain is Glutamate--tRNA ligase (473 aa).

A 'HIGH' region motif is present at residues Pro-11–Gly-21. The 'KMSKS' region signature appears at Lys-240 to Arg-244. Position 243 (Lys-243) interacts with ATP.

The protein belongs to the class-I aminoacyl-tRNA synthetase family. Glutamate--tRNA ligase type 1 subfamily. In terms of assembly, monomer.

The protein localises to the cytoplasm. It carries out the reaction tRNA(Glu) + L-glutamate + ATP = L-glutamyl-tRNA(Glu) + AMP + diphosphate. Functionally, catalyzes the attachment of glutamate to tRNA(Glu) in a two-step reaction: glutamate is first activated by ATP to form Glu-AMP and then transferred to the acceptor end of tRNA(Glu). This chain is Glutamate--tRNA ligase, found in Rhodopseudomonas palustris (strain ATCC BAA-98 / CGA009).